The primary structure comprises 83 residues: uncharacterized protein (83 aa).

A helical transmembrane segment spans residues 58–78 (AVLLWIAIIATLGNIVVVGVV).

The protein localises to the membrane. This is an uncharacterized protein from Homo sapiens (Human).